The following is a 116-amino-acid chain: Protein Rev (116 aa).

Phosphoserine; by host CK2 occurs at positions 5 and 8. Residues 18 to 26 form a homomultimerization region; sequence LIKFLYQSN. Residues 23–48 are disordered; the sequence is YQSNPPPKPEGTRQARRNRRRRWRER. The short motif at 34-50 is the Nuclear localization signal and RNA-binding (RRE) element; sequence TRQARRNRRRRWRERQR. Positions 36–47 are enriched in basic residues; that stretch reads QARRNRRRRWRE. A Nuclear export signal and binding to XPO1 motif is present at residues 73-84; sequence LQLPPLERLTLD. Serine 92 and serine 99 each carry phosphoserine; by host. Residues 92–116 are disordered; it reads SGTQGVGSPQILVESPTVLESGTKE.

The protein belongs to the HIV-1 REV protein family. In terms of assembly, homomultimer; when bound to the RRE. Multimeric assembly is essential for activity and may involve XPO1. Binds to human KPNB1, XPO1, TNPO1, RANBP5 and IPO7. Interacts with the viral Integrase. Interacts with human KHDRBS1. Interacts with human NAP1; this interaction decreases Rev multimerization and stimulates its activity. Interacts with human DEAD-box helicases DDX3 and DDX24; these interactions may serve for viral RNA export to the cytoplasm and packaging, respectively. Interacts with human PSIP1; this interaction may inhibit HIV-1 DNA integration by promoting dissociation of the Integrase-LEDGF/p75 complex. Post-translationally, asymmetrically arginine dimethylated at one site by host PRMT6. Methylation impairs the RNA-binding activity and export of viral RNA from the nucleus to the cytoplasm. Phosphorylated by protein kinase CK2. Presence of, and maybe binding to the N-terminus of the regulatory beta subunit of CK2 is necessary for CK2-mediated Rev's phosphorylation.

Its subcellular location is the host nucleus. It localises to the host nucleolus. It is found in the host cytoplasm. Escorts unspliced or incompletely spliced viral pre-mRNAs (late transcripts) out of the nucleus of infected cells. These pre-mRNAs carry a recognition sequence called Rev responsive element (RRE) located in the env gene, that is not present in fully spliced viral mRNAs (early transcripts). This function is essential since most viral proteins are translated from unspliced or partially spliced pre-mRNAs which cannot exit the nucleus by the pathway used by fully processed cellular mRNAs. Rev itself is translated from a fully spliced mRNA that readily exits the nucleus. Rev's nuclear localization signal (NLS) binds directly to KPNB1/Importin beta-1 without previous binding to KPNA1/Importin alpha-1. KPNB1 binds to the GDP bound form of RAN (Ran-GDP) and targets Rev to the nucleus. In the nucleus, the conversion from Ran-GDP to Ran-GTP dissociates Rev from KPNB1 and allows Rev's binding to the RRE in viral pre-mRNAs. Rev multimerization on the RRE via cooperative assembly exposes its nuclear export signal (NES) to the surface. Rev can then form a complex with XPO1/CRM1 and Ran-GTP, leading to nuclear export of the complex. Conversion from Ran-GTP to Ran-GDP mediates dissociation of the Rev/RRE/XPO1/RAN complex, so that Rev can return to the nucleus for a subsequent round of export. Beside KPNB1, also seems to interact with TNPO1/Transportin-1, RANBP5/IPO5 and IPO7/RANBP7 for nuclear import. The nucleoporin-like HRB/RIP is an essential cofactor that probably indirectly interacts with Rev to release HIV RNAs from the perinuclear region to the cytoplasm. In Human immunodeficiency virus type 1 group M subtype B (isolate SC) (HIV-1), this protein is Protein Rev.